A 113-amino-acid polypeptide reads, in one-letter code: Phosphoribosyl-ATP pyrophosphatase (113 aa).

Belongs to the PRA-PH family.

Its subcellular location is the cytoplasm. The catalysed reaction is 1-(5-phospho-beta-D-ribosyl)-ATP + H2O = 1-(5-phospho-beta-D-ribosyl)-5'-AMP + diphosphate + H(+). It functions in the pathway amino-acid biosynthesis; L-histidine biosynthesis; L-histidine from 5-phospho-alpha-D-ribose 1-diphosphate: step 2/9. This Janthinobacterium sp. (strain Marseille) (Minibacterium massiliensis) protein is Phosphoribosyl-ATP pyrophosphatase.